Here is a 78-residue protein sequence, read N- to C-terminus: Ferredoxin oxidoreductase 2 subunit ForD (78 aa).

2 4Fe-4S ferredoxin-type domains span residues 3-35 (FVAD…FKAS) and 37-66 (NSAW…HCIE). [4Fe-4S] cluster contacts are provided by cysteine 12, cysteine 17, cysteine 20, cysteine 24, cysteine 46, cysteine 49, cysteine 52, and cysteine 56.

As to quaternary structure, heterotetramer of one alpha, one beta, one delta and one gamma chain. [4Fe-4S] cluster serves as cofactor.

The protein is Ferredoxin oxidoreductase 2 subunit ForD (forD2) of Aquifex aeolicus (strain VF5).